The following is a 200-amino-acid chain: A-type ATP synthase subunit E 3 (200 aa).

This sequence belongs to the V-ATPase E subunit family. Has multiple subunits with at least A(3), B(3), C, D, E, F, H, I and proteolipid K(x).

Its subcellular location is the cell membrane. In terms of biological role, component of the A-type ATP synthase that produces ATP from ADP in the presence of a proton gradient across the membrane. This Methanospirillum hungatei JF-1 (strain ATCC 27890 / DSM 864 / NBRC 100397 / JF-1) protein is A-type ATP synthase subunit E 3.